The sequence spans 207 residues: ATP-dependent Clp protease proteolytic subunit (207 aa).

Ser111 acts as the Nucleophile in catalysis. Residue His136 is part of the active site.

This sequence belongs to the peptidase S14 family. Fourteen ClpP subunits assemble into 2 heptameric rings which stack back to back to give a disk-like structure with a central cavity, resembling the structure of eukaryotic proteasomes.

The protein resides in the cytoplasm. The catalysed reaction is Hydrolysis of proteins to small peptides in the presence of ATP and magnesium. alpha-casein is the usual test substrate. In the absence of ATP, only oligopeptides shorter than five residues are hydrolyzed (such as succinyl-Leu-Tyr-|-NHMec, and Leu-Tyr-Leu-|-Tyr-Trp, in which cleavage of the -Tyr-|-Leu- and -Tyr-|-Trp bonds also occurs).. Cleaves peptides in various proteins in a process that requires ATP hydrolysis. Has a chymotrypsin-like activity. Plays a major role in the degradation of misfolded proteins. The chain is ATP-dependent Clp protease proteolytic subunit from Yersinia pseudotuberculosis serotype O:1b (strain IP 31758).